The chain runs to 549 residues: Lysine-specific demethylase JMJ31 (549 aa).

One can recognise a JmjC domain in the interval D125–Y296. The Fe cation site is built by H184, D186, and H266.

The protein belongs to the JARID1 histone demethylase family. Fe(2+) is required as a cofactor. In terms of tissue distribution, mostly expressed in leaves and inflorescences, and, to a lower extent, in roots, siliques and stems.

The protein resides in the nucleus. Functionally, may function as histone H3 lysine demethylase and be involved in regulation of gene expression. The sequence is that of Lysine-specific demethylase JMJ31 from Arabidopsis thaliana (Mouse-ear cress).